The chain runs to 565 residues: NAD-dependent malic enzyme (565 aa).

The active-site Proton donor is tyrosine 104. Arginine 157 lines the NAD(+) pocket. Lysine 175 functions as the Proton acceptor in the catalytic mechanism. Residues glutamate 246, aspartate 247, and aspartate 270 each coordinate a divalent metal cation. Positions 270 and 418 each coordinate NAD(+).

Belongs to the malic enzymes family. As to quaternary structure, homotetramer. Requires Mg(2+) as cofactor. The cofactor is Mn(2+).

It catalyses the reaction (S)-malate + NAD(+) = pyruvate + CO2 + NADH. The enzyme catalyses oxaloacetate + H(+) = pyruvate + CO2. This chain is NAD-dependent malic enzyme, found in Escherichia coli O127:H6 (strain E2348/69 / EPEC).